The following is a 346-amino-acid chain: L-malyl-CoA/beta-methylmalyl-CoA lyase (346 aa).

Mg(2+) is bound by residues Glu148 and Asp177. Substrate contacts are provided by residues 176–177 (VD) and 253–254 (LH).

It belongs to the HpcH/HpaI aldolase family. Requires Mg(2+) as cofactor. Mn(2+) serves as cofactor.

It catalyses the reaction (S)-malyl-CoA = glyoxylate + acetyl-CoA. It carries out the reaction (2R,3S)-beta-methylmalyl-CoA = propanoyl-CoA + glyoxylate. Involved in the methylaspartate cycle. Catalyzes the reversible cleavage of beta-methylmalyl-CoA to propionyl-CoA and glyoxylate, as well as the reversible cleavage of (S)-malyl-CoA to acetyl-CoA and glyoxylate. In addition, it has a small malyl-CoA thioesterase activity. It can also catalyze the cleavage of (S)-citramalyl-CoA to acetyl-CoA and pyruvate. This is L-malyl-CoA/beta-methylmalyl-CoA lyase (citE1) from Haloarcula marismortui (strain ATCC 43049 / DSM 3752 / JCM 8966 / VKM B-1809) (Halobacterium marismortui).